Consider the following 38-residue polypeptide: L-amino-acid oxidase (38 aa).

It belongs to the flavin monoamine oxidase family. FIG1 subfamily. Homodimer; non-covalently linked. Requires FAD as cofactor. N-glycosylated. In terms of tissue distribution, expressed by the venom gland.

The protein resides in the secreted. The enzyme catalyses an L-alpha-amino acid + O2 + H2O = a 2-oxocarboxylate + H2O2 + NH4(+). It carries out the reaction L-leucine + O2 + H2O = 4-methyl-2-oxopentanoate + H2O2 + NH4(+). The catalysed reaction is L-phenylalanine + O2 + H2O = 3-phenylpyruvate + H2O2 + NH4(+). It catalyses the reaction L-tryptophan + O2 + H2O = indole-3-pyruvate + H2O2 + NH4(+). The enzyme catalyses L-methionine + O2 + H2O = 4-methylsulfanyl-2-oxobutanoate + H2O2 + NH4(+). It carries out the reaction L-arginine + O2 + H2O = 5-guanidino-2-oxopentanoate + H2O2 + NH4(+). The catalysed reaction is L-2-aminohexanoate + O2 + H2O = 2-oxohexanoate + H2O2 + NH4(+). It catalyses the reaction L-2-aminopentanoate + O2 + H2O = 2-oxopentanoate + H2O2 + NH4(+). The enzyme catalyses L-tyrosine + O2 + H2O = 3-(4-hydroxyphenyl)pyruvate + H2O2 + NH4(+). In terms of biological role, catalyzes an oxidative deamination of predominantly hydrophobic and aromatic L-amino acids, thus producing hydrogen peroxide that may contribute to the diverse toxic effects of this enzyme. Is very active against L-Phe and L-Tyr, moderately active against L-Trp, L-Met, L-Leu, L-norleucine (L-2-aminohexanoate), L-Arg and L-norvaline (L-2-aminopentanoate), and slightly active against L-His, L-cystine, and L-Ile. L-Gln, L-Lys, L-Asn, L-ornithine, L-Ala and L-Val are oxidized very slowly. Exhibits diverse biological activities, such as hemorrhage, hemolysis, edema, apoptosis of vascular endothelial cells or tumor cell lines, antibacterial and antiparasitic activities. This protein inhibits both agonist- and shear stress-induced platelet aggregation (SIPA). Effects of snake L-amino oxidases on platelets are controversial, since they either induce aggregation or inhibit agonist-induced aggregation. These different effects are probably due to different experimental conditions. The sequence is that of L-amino-acid oxidase from Naja kaouthia (Monocled cobra).